The following is a 339-amino-acid chain: Annexin A2 (339 aa).

At Ser2 the chain carries N-acetylserine. The segment at 2–24 is S100A10-binding site; that stretch reads STVHEILSKLSLEGDHSLPPSAY. Position 24 is a phosphotyrosine; by SRC (Tyr24). Phosphothreonine; by PKC is present on Thr26. Annexin repeat units follow at residues 33 to 104, 105 to 176, 189 to 261, and 265 to 336; these read FDAD…GLLK, TPSQ…ALAK, ELID…NLVQ, and NKQL…NLCG.

The protein belongs to the annexin family. In terms of assembly, heterotetramer containing 2 light chains of S100A10/p11 and 2 heavy chains of ANXA2/p36.

It is found in the secreted. Its subcellular location is the extracellular space. The protein localises to the extracellular matrix. It localises to the basement membrane. Functionally, calcium-regulated membrane-binding protein whose affinity for calcium is greatly enhanced by anionic phospholipids. It binds two calcium ions with high affinity. The polypeptide is Annexin A2 (ANXA2) (Gallus gallus (Chicken)).